Reading from the N-terminus, the 268-residue chain is GTP cyclohydrolase FolE2 (268 aa).

This sequence belongs to the GTP cyclohydrolase IV family.

The catalysed reaction is GTP + H2O = 7,8-dihydroneopterin 3'-triphosphate + formate + H(+). The protein operates within cofactor biosynthesis; 7,8-dihydroneopterin triphosphate biosynthesis; 7,8-dihydroneopterin triphosphate from GTP: step 1/1. Converts GTP to 7,8-dihydroneopterin triphosphate. The chain is GTP cyclohydrolase FolE2 from Paraburkholderia xenovorans (strain LB400).